The primary structure comprises 296 residues: Tyrosine recombinase XerC (296 aa).

The Core-binding (CB) domain maps to 1-84 (MDKIQETFLY…TLRTFYEFWM (84 aa)). The Tyr recombinase domain maps to 105–286 (YLPQFFYEEE…SNQQLRKVYL (182 aa)). Active-site residues include Arg-145, Lys-169, His-238, Arg-241, and His-264. Tyr-273 serves as the catalytic O-(3'-phospho-DNA)-tyrosine intermediate.

The protein belongs to the 'phage' integrase family. XerC subfamily. As to quaternary structure, forms a cyclic heterotetrameric complex composed of two molecules of XerC and two molecules of XerD.

The protein localises to the cytoplasm. In terms of biological role, site-specific tyrosine recombinase, which acts by catalyzing the cutting and rejoining of the recombining DNA molecules. The XerC-XerD complex is essential to convert dimers of the bacterial chromosome into monomers to permit their segregation at cell division. It also contributes to the segregational stability of plasmids. The polypeptide is Tyrosine recombinase XerC (Staphylococcus epidermidis (strain ATCC 35984 / DSM 28319 / BCRC 17069 / CCUG 31568 / BM 3577 / RP62A)).